The sequence spans 396 residues: Tryptophan synthase beta chain (396 aa).

N6-(pyridoxal phosphate)lysine is present on Lys-86.

It belongs to the TrpB family. As to quaternary structure, tetramer of two alpha and two beta chains. Requires pyridoxal 5'-phosphate as cofactor.

The catalysed reaction is (1S,2R)-1-C-(indol-3-yl)glycerol 3-phosphate + L-serine = D-glyceraldehyde 3-phosphate + L-tryptophan + H2O. The protein operates within amino-acid biosynthesis; L-tryptophan biosynthesis; L-tryptophan from chorismate: step 5/5. Functionally, the beta subunit is responsible for the synthesis of L-tryptophan from indole and L-serine. The chain is Tryptophan synthase beta chain from Francisella tularensis subsp. holarctica (strain FTNF002-00 / FTA).